The following is a 240-amino-acid chain: tRNA (guanine-N(1)-)-methyltransferase (240 aa).

Residues Gly-110 and 129–134 contribute to the S-adenosyl-L-methionine site; that span reads LGDFVL.

The protein belongs to the RNA methyltransferase TrmD family. As to quaternary structure, homodimer.

It is found in the cytoplasm. It catalyses the reaction guanosine(37) in tRNA + S-adenosyl-L-methionine = N(1)-methylguanosine(37) in tRNA + S-adenosyl-L-homocysteine + H(+). Specifically methylates guanosine-37 in various tRNAs. In Clostridium botulinum (strain Langeland / NCTC 10281 / Type F), this protein is tRNA (guanine-N(1)-)-methyltransferase.